Reading from the N-terminus, the 240-residue chain is Phosphatidylserine decarboxylase proenzyme (240 aa).

Ser209 acts as the Schiff-base intermediate with substrate; via pyruvic acid in catalysis. Ser209 is modified (pyruvic acid (Ser); by autocatalysis).

It belongs to the phosphatidylserine decarboxylase family. PSD-A subfamily. In terms of assembly, heterodimer of a large membrane-associated beta subunit and a small pyruvoyl-containing alpha subunit. Requires pyruvate as cofactor. Post-translationally, is synthesized initially as an inactive proenzyme. Formation of the active enzyme involves a self-maturation process in which the active site pyruvoyl group is generated from an internal serine residue via an autocatalytic post-translational modification. Two non-identical subunits are generated from the proenzyme in this reaction, and the pyruvate is formed at the N-terminus of the alpha chain, which is derived from the carboxyl end of the proenzyme. The post-translation cleavage follows an unusual pathway, termed non-hydrolytic serinolysis, in which the side chain hydroxyl group of the serine supplies its oxygen atom to form the C-terminus of the beta chain, while the remainder of the serine residue undergoes an oxidative deamination to produce ammonia and the pyruvoyl prosthetic group on the alpha chain.

It localises to the cell membrane. The catalysed reaction is a 1,2-diacyl-sn-glycero-3-phospho-L-serine + H(+) = a 1,2-diacyl-sn-glycero-3-phosphoethanolamine + CO2. It functions in the pathway phospholipid metabolism; phosphatidylethanolamine biosynthesis; phosphatidylethanolamine from CDP-diacylglycerol: step 2/2. In terms of biological role, catalyzes the formation of phosphatidylethanolamine (PtdEtn) from phosphatidylserine (PtdSer). This chain is Phosphatidylserine decarboxylase proenzyme, found in Mycobacterium marinum (strain ATCC BAA-535 / M).